Here is a 60-residue protein sequence, read N- to C-terminus: UPF0181 protein ESA_01442 (60 aa).

Belongs to the UPF0181 family.

This chain is UPF0181 protein ESA_01442, found in Cronobacter sakazakii (strain ATCC BAA-894) (Enterobacter sakazakii).